The sequence spans 346 residues: Tetraacyldisaccharide 4'-kinase (346 aa).

54 to 61 (TVGGAGKT) contacts ATP.

The protein belongs to the LpxK family.

The catalysed reaction is a lipid A disaccharide + ATP = a lipid IVA + ADP + H(+). Its pathway is glycolipid biosynthesis; lipid IV(A) biosynthesis; lipid IV(A) from (3R)-3-hydroxytetradecanoyl-[acyl-carrier-protein] and UDP-N-acetyl-alpha-D-glucosamine: step 6/6. Its function is as follows. Transfers the gamma-phosphate of ATP to the 4'-position of a tetraacyldisaccharide 1-phosphate intermediate (termed DS-1-P) to form tetraacyldisaccharide 1,4'-bis-phosphate (lipid IVA). The polypeptide is Tetraacyldisaccharide 4'-kinase (Sinorhizobium fredii (strain NBRC 101917 / NGR234)).